Consider the following 139-residue polypeptide: 10 kDa chaperonin 2, chloroplastic (139 aa).

The transit peptide at 1–39 (MASTFVCSLPNPFFAFPVKATTPSTANHTLLGSRRGCLR) directs the protein to the chloroplast. The interval 51–138 (KVVPQADRVL…CKESDLLALV (88 aa)) is cpn-10 domain.

Belongs to the GroES chaperonin family. Expressed in leaves and stems. Expressed at low levels in germinating seeds, seedlings, rosettes leaves, flowers and siliques.

The protein localises to the plastid. It is found in the chloroplast stroma. Its function is as follows. Functions as a co-chaperone for protein folding in chloroplasts. This chain is 10 kDa chaperonin 2, chloroplastic, found in Arabidopsis thaliana (Mouse-ear cress).